Reading from the N-terminus, the 345-residue chain is UPF0284 protein STK_21430 (345 aa).

The protein belongs to the UPF0284 family.

The chain is UPF0284 protein STK_21430 from Sulfurisphaera tokodaii (strain DSM 16993 / JCM 10545 / NBRC 100140 / 7) (Sulfolobus tokodaii).